We begin with the raw amino-acid sequence, 182 residues long: Ferritin heavy chain (182 aa).

N-acetylmethionine is present on Met-1. Thr-2 carries the N-acetylthreonine; in Ferritin heavy chain, N-terminally processed modification. Residues 11–160 (QNYHQDAEAA…DHVTNLRKMG (150 aa)) enclose the Ferritin-like diiron domain. 5 residues coordinate Fe cation: Glu-28, Glu-63, His-66, Glu-108, and Gln-142.

Belongs to the ferritin family. Oligomer of 24 subunits. There are two types of subunits: L (light) chain and H (heavy) chain. The major chain can be light or heavy, depending on the species and tissue type. The functional molecule forms a roughly spherical shell with a diameter of 12 nm and contains a central cavity into which the insoluble mineral iron core is deposited. Interacts with NCOA4; NCOA4 promotes targeting of the iron-binding ferritin complex to autolysosomes following starvation or iron depletion.

The protein localises to the cytoplasm. Its subcellular location is the cytoplasmic vesicle. The protein resides in the autophagosome. It is found in the autolysosome. It carries out the reaction 4 Fe(2+) + O2 + 4 H(+) = 4 Fe(3+) + 2 H2O. Its function is as follows. Stores iron in a soluble, non-toxic, readily available form. Important for iron homeostasis. Has ferroxidase activity. Iron is taken up in the ferrous form and deposited as ferric hydroxides after oxidation. Also plays a role in delivery of iron to cells. Mediates iron uptake in capsule cells of the developing kidney. Degraded to release iron upon autophagy activation by nutrient starvation. The chain is Ferritin heavy chain (Fth1) from Mus musculus (Mouse).